A 103-amino-acid chain; its full sequence is MENIEKKEIRPLYIRERVAVYVYCYSYKGTRQLSRFGDIVYSSQKSHYSLLYVNNDEVADLLNKLKELRFVKKVRVGHIKELDQNFSEAFIQTNLEVKEELEH.

Belongs to the UPF0298 family.

Its subcellular location is the cytoplasm. This Lactococcus lactis subsp. cremoris (strain SK11) protein is UPF0298 protein LACR_0404.